The following is a 610-amino-acid chain: UvrABC system protein C (610 aa).

One can recognise a GIY-YIG domain in the interval Ser16 to Val94. Positions Gln204–Val239 constitute a UVR domain.

It belongs to the UvrC family. In terms of assembly, interacts with UvrB in an incision complex.

The protein localises to the cytoplasm. The UvrABC repair system catalyzes the recognition and processing of DNA lesions. UvrC both incises the 5' and 3' sides of the lesion. The N-terminal half is responsible for the 3' incision and the C-terminal half is responsible for the 5' incision. The sequence is that of UvrABC system protein C from Sodalis glossinidius (strain morsitans).